We begin with the raw amino-acid sequence, 269 residues long: Meiotic drive suppressor wtf5 (269 aa).

The disordered stretch occupies residues 1–65; sequence MKNNYTSLKS…NTHRENHSYG (65 aa). Residues 19–30 are compositionally biased toward basic and acidic residues; that stretch reads KTDHEIDLEKGP. 3 helical membrane passes run 73–95, 110–132, and 206–228; these read LLII…VCYL, WTLF…YFYE, and WGLK…VFIA.

The protein belongs to the WTF family. Homomer. Interacts with other proteins that exhibit high sequence similarity.

The protein localises to the spore membrane. Its subcellular location is the vacuole membrane. Acts as a suppressor component of the dual wtf meiotic drive system, and can suppress but not confer meiotic drive by compatible poisons. Wtf meiotic drive systems promote unequal transmission of alleles from the parental zygote to progeny spores by encoding a poison and an antidote from the same locus; the poison is trans-acting and forms toxic aggregates in all spores within an ascus, wherease the antidote is spore-specific and targets aggregates for degradation by the vacuole. Meiotic drive by wtf systems therefore lead to poisoning of all progeny that do not inherit the dual poison/antidote allele, or express a compatible antidote. This Schizosaccharomyces pombe (strain 972 / ATCC 24843) (Fission yeast) protein is Meiotic drive suppressor wtf5.